Reading from the N-terminus, the 119-residue chain is Beta-2-microglobulin (119 aa).

A signal peptide spans 1–20; the sequence is MARFVVVALLALLSLSGLEA. The 90-residue stretch at 25–114 folds into the Ig-like C1-type domain; sequence PKIQVYSRHP…VTFPTPKTVK (90 aa). A disulfide bridge connects residues C45 and C100.

It belongs to the beta-2-microglobulin family. Heterodimer of an alpha chain and a beta chain. Beta-2-microglobulin is the beta-chain of major histocompatibility complex class I molecules.

It localises to the secreted. Component of the class I major histocompatibility complex (MHC). Involved in the presentation of peptide antigens to the immune system. In Alouatta seniculus (Red howler monkey), this protein is Beta-2-microglobulin (B2M).